We begin with the raw amino-acid sequence, 104 residues long: Large ribosomal subunit protein bL21 (104 aa).

It belongs to the bacterial ribosomal protein bL21 family. Part of the 50S ribosomal subunit. Contacts protein L20.

Functionally, this protein binds to 23S rRNA in the presence of protein L20. The protein is Large ribosomal subunit protein bL21 of Opitutus terrae (strain DSM 11246 / JCM 15787 / PB90-1).